Consider the following 236-residue polypeptide: Purine nucleoside phosphorylase DeoD-type 2 (236 aa).

His-5 serves as a coordination point for a purine D-ribonucleoside. Phosphate is bound by residues Gly-21, Arg-25, Arg-44, and 88 to 91 (RVGS). Residues 180–182 (DME) and 204–205 (SD) contribute to the a purine D-ribonucleoside site. Asp-205 serves as the catalytic Proton donor.

The protein belongs to the PNP/UDP phosphorylase family. In terms of assembly, homohexamer; trimer of homodimers.

The enzyme catalyses a purine D-ribonucleoside + phosphate = a purine nucleobase + alpha-D-ribose 1-phosphate. It carries out the reaction a purine 2'-deoxy-D-ribonucleoside + phosphate = a purine nucleobase + 2-deoxy-alpha-D-ribose 1-phosphate. Its function is as follows. Catalyzes the reversible phosphorolytic breakdown of the N-glycosidic bond in the beta-(deoxy)ribonucleoside molecules, with the formation of the corresponding free purine bases and pentose-1-phosphate. This chain is Purine nucleoside phosphorylase DeoD-type 2, found in Photobacterium profundum (strain SS9).